We begin with the raw amino-acid sequence, 377 residues long: Probable staphylococcal-like nuclease CAN3 (377 aa).

Residue glycine 2 is the site of N-myristoyl glycine attachment. The S-palmitoyl cysteine moiety is linked to residue cysteine 7. The segment at 15 to 57 is disordered; that stretch reads GDHYPYYKPTSRPHYQPPHYHGQPAAPPAPPQQQPLGPHGVTP. Over residues 27-38 the composition is skewed to low complexity; that stretch reads PHYQPPHYHGQP. In terms of domain architecture, TNase-like spans 177–353; it reads NTLPVYDKCI…KAANRGLWAS (177 aa). Aspartate 190 provides a ligand contact to Ca(2+). The active site involves arginine 260. Aspartate 265 contributes to the Ca(2+) binding site. Residues glutamate 268 and arginine 302 contribute to the active site.

Belongs to the thermonuclease family. Requires Ca(2+) as cofactor.

It localises to the cell membrane. Functionally, enzyme that catalyzes the hydrolysis of both DNA and RNA at the 5' position of the phosphodiester bond. The protein is Probable staphylococcal-like nuclease CAN3 of Oryza sativa subsp. japonica (Rice).